Reading from the N-terminus, the 252-residue chain is tRNA1(Val) (adenine(37)-N6)-methyltransferase (252 aa).

Belongs to the methyltransferase superfamily. tRNA (adenine-N(6)-)-methyltransferase family.

It is found in the cytoplasm. It carries out the reaction adenosine(37) in tRNA1(Val) + S-adenosyl-L-methionine = N(6)-methyladenosine(37) in tRNA1(Val) + S-adenosyl-L-homocysteine + H(+). Functionally, specifically methylates the adenine in position 37 of tRNA(1)(Val) (anticodon cmo5UAC). This is tRNA1(Val) (adenine(37)-N6)-methyltransferase from Yersinia pseudotuberculosis serotype IB (strain PB1/+).